We begin with the raw amino-acid sequence, 177 residues long: MSELTTVARPYAKAAFEFAVEAKAIDSWLVQLTFAAEVAKDETIKGFLSSGASVEQAQTLFLNVCGEQVDSQGQNFLKVMAINERLLVLPQVLEQFIALKADFDQEVSVDVTSAVEVTAEQKTTLSAALEKRLARKVKLNCFVDASIVSGLVIKAGDMVIDGSIKGKLNRLATTLQS.

It belongs to the ATPase delta chain family. As to quaternary structure, F-type ATPases have 2 components, F(1) - the catalytic core - and F(0) - the membrane proton channel. F(1) has five subunits: alpha(3), beta(3), gamma(1), delta(1), epsilon(1). F(0) has three main subunits: a(1), b(2) and c(10-14). The alpha and beta chains form an alternating ring which encloses part of the gamma chain. F(1) is attached to F(0) by a central stalk formed by the gamma and epsilon chains, while a peripheral stalk is formed by the delta and b chains.

It is found in the cell inner membrane. F(1)F(0) ATP synthase produces ATP from ADP in the presence of a proton or sodium gradient. F-type ATPases consist of two structural domains, F(1) containing the extramembraneous catalytic core and F(0) containing the membrane proton channel, linked together by a central stalk and a peripheral stalk. During catalysis, ATP synthesis in the catalytic domain of F(1) is coupled via a rotary mechanism of the central stalk subunits to proton translocation. Its function is as follows. This protein is part of the stalk that links CF(0) to CF(1). It either transmits conformational changes from CF(0) to CF(1) or is implicated in proton conduction. This chain is ATP synthase subunit delta, found in Colwellia psychrerythraea (strain 34H / ATCC BAA-681) (Vibrio psychroerythus).